The sequence spans 200 residues: MKFLLFCCLFGTFLATGMCIDCEHCVVWGQNCTGWKETCGENEDTCVTYQTEVIRPPLSITFTAKTCGTSDTCHLDYVEANPHTELTLRAKRACCTGDECQTLPPPVLEPQVNRPNGLQCPGCIGLTSTECNEYLVSCQGSENQCLTIILKKPDFSLSEMSFKGCASENLCLLFEKKFWRFLEASEVDVKCTPAVPQTSQ.

An N-terminal signal peptide occupies residues 1–19; that stretch reads MKFLLFCCLFGTFLATGMC. Cystine bridges form between Cys22-Cys46, Cys25-Cys32, Cys39-Cys67, Cys73-Cys94, Cys95-Cys100, Cys120-Cys145, Cys138-Cys165, and Cys171-Cys191. N-linked (GlcNAc...) asparagine glycosylation is present at Asn31.

This sequence belongs to the CNF-like-inhibitor family. In terms of assembly, heterodimer of subunit A and subunit B. In terms of processing, N-glycosylated. Expressed by the liver. Not expressed in esophagus, stomach, pancreas, spleen, gall bladder, small intestine, rectum, kidney, trachea, lung, testis and body fat.

It localises to the secreted. In terms of biological role, inhibits the enzymatic activity of phospholipase A2 (PA2). The polypeptide is Phospholipase A2 inhibitor gamma subunit B (Elaphe quadrivirgata (Japanese four-lined ratsnake)).